Here is a 446-residue protein sequence, read N- to C-terminus: Radical S-adenosyl methionine domain-containing protein 1, mitochondrial (446 aa).

Residues 15–277 form the Radical SAM core domain; that stretch reads KGYNKLKDLP…VCEAEAMGFQ (263 aa). [4Fe-4S] cluster is bound by residues cysteine 34, cysteine 38, and cysteine 41. S-adenosyl-L-methionine contacts are provided by residues glycine 94, 95–96, glutamate 130, glutamine 159, arginine 171, and aspartate 195; that span reads GT.

This sequence belongs to the anaerobic coproporphyrinogen-III oxidase family. HemW subfamily.

It is found in the mitochondrion. May be a heme chaperone, appears to bind heme. Homologous bacterial proteins do not have oxygen-independent coproporphyrinogen-III oxidase activity. Binds 1 [4Fe-4S] cluster. The cluster is coordinated with 3 cysteines and an exchangeable S-adenosyl-L-methionine. In Dictyostelium discoideum (Social amoeba), this protein is Radical S-adenosyl methionine domain-containing protein 1, mitochondrial (rsad1).